A 374-amino-acid chain; its full sequence is N-acetyldiaminopimelate deacetylase (374 aa).

The active site involves D69. The active-site Proton acceptor is the E128.

Belongs to the peptidase M20A family. N-acetyldiaminopimelate deacetylase subfamily.

The enzyme catalyses N-acetyl-(2S,6S)-2,6-diaminopimelate + H2O = (2S,6S)-2,6-diaminopimelate + acetate. Its pathway is amino-acid biosynthesis; L-lysine biosynthesis via DAP pathway; LL-2,6-diaminopimelate from (S)-tetrahydrodipicolinate (acetylase route): step 3/3. Its function is as follows. Catalyzes the conversion of N-acetyl-diaminopimelate to diaminopimelate and acetate. This chain is N-acetyldiaminopimelate deacetylase, found in Bacillus licheniformis (strain ATCC 14580 / DSM 13 / JCM 2505 / CCUG 7422 / NBRC 12200 / NCIMB 9375 / NCTC 10341 / NRRL NRS-1264 / Gibson 46).